The chain runs to 775 residues: 5-methyltetrahydropteroyltriglutamate--homocysteine methyltransferase (775 aa).

Residues 15–18 (RELK) and lysine 118 contribute to the 5-methyltetrahydropteroyltri-L-glutamate site. L-homocysteine-binding positions include 448–450 (IGS) and glutamate 501. Residues 448–450 (IGS) and glutamate 501 each bind L-methionine. 5-methyltetrahydropteroyltri-L-glutamate is bound by residues 532–533 (RC) and tryptophan 578. An L-homocysteine-binding site is contributed by aspartate 616. Aspartate 616 contributes to the L-methionine binding site. Glutamate 622 provides a ligand contact to 5-methyltetrahydropteroyltri-L-glutamate. 3 residues coordinate Zn(2+): histidine 658, cysteine 660, and glutamate 682. Histidine 711 serves as the catalytic Proton donor. A Zn(2+)-binding site is contributed by cysteine 743.

It belongs to the vitamin-B12 independent methionine synthase family. Requires Zn(2+) as cofactor.

The enzyme catalyses 5-methyltetrahydropteroyltri-L-glutamate + L-homocysteine = tetrahydropteroyltri-L-glutamate + L-methionine. It participates in amino-acid biosynthesis; L-methionine biosynthesis via de novo pathway; L-methionine from L-homocysteine (MetE route): step 1/1. Its function is as follows. Catalyzes the transfer of a methyl group from 5-methyltetrahydrofolate to homocysteine resulting in methionine formation. This Cytophaga hutchinsonii (strain ATCC 33406 / DSM 1761 / CIP 103989 / NBRC 15051 / NCIMB 9469 / D465) protein is 5-methyltetrahydropteroyltriglutamate--homocysteine methyltransferase.